The sequence spans 72 residues: Heat-stable enterotoxin ST-IA/ST-P (72 aa).

The first 19 residues, 1 to 19 (MKKLMLAIFISVLSFPSFS), serve as a signal peptide directing secretion. Residues 20–54 (QSTESLDSSKEKITLETKKCDVVKNNSEKKSENMN) constitute a propeptide that is removed on maturation. 3 cysteine pairs are disulfide-bonded: Cys-59–Cys-64, Cys-60–Cys-68, and Cys-63–Cys-71.

It belongs to the heat-stable enterotoxin family.

It is found in the secreted. Toxin which activates the particulate form of guanylate cyclase and increases cyclic GMP levels within the host intestinal epithelial cells. The polypeptide is Heat-stable enterotoxin ST-IA/ST-P (sta1) (Escherichia coli).